Reading from the N-terminus, the 631-residue chain is ATP-dependent protease PrkA (631 aa).

Thr217 is subject to Phosphothreonine. Residue Ser219 is modified to Phosphoserine.

Belongs to the PrkA family. In terms of processing, phosphorylated by PrkC on two sites, Thr-217 and Ser-219, with the threonine being the major site of modification.

The protein resides in the forespore. Its subcellular location is the spore coat. It carries out the reaction Hydrolysis of proteins in presence of ATP.. Its activity is regulated as follows. Hydrolase activity is regulated by phosphorylation by the Ser/Thr kinase PrkC, probably allowing fine control of sporulation. Phosphorylation by PrkC does not prevent ATP fixation but it inhibits specifically PrkA protease activity and down-regulates the sporulation processes. Hydrolase activity is inhibited by a protease inhibitor, phenylmethylsulfonyl fluoride (PMSF). Potential kinase activity requires the presence of MgCl(2) and is inhibited in the presence of MnCl(2). ATP-dependent protease that regulates sporulation. Is able to bind and hydrolyze ATP. This ATP-dependent protease activity is necessary for efficient sporulation of B.subtilis. In vitro, can hydrolyze alpha-casein, an exogenous substrate of Lon proteases, in an ATP-dependent manner. PrkA also modulates sporulation by negatively regulating the transcriptional regulator Hpr/ScoC to induce the expression of sigK. The control of sporulation mediated via the Hpr/ScoC regulator is probably indirect. PrkA was originally thought to be a protein kinase, as it has been shown to phosphorylate in vitro an unidentified 60 kDa protein from B.subtilis crude extracts at a serine residue. However, Zhang et al. did not observe autophosphorylation or kinase activity for this protein, suggesting that it may have lost its kinase activity during evolution or may be a pseudokinase. This Bacillus subtilis (strain 168) protein is ATP-dependent protease PrkA.